A 410-amino-acid polypeptide reads, in one-letter code: Sprouty-related, EVH1 domain-containing protein 3 (410 aa).

Positions 1–113 (MVRVRAVVMA…KSLLAALAAL (113 aa)) constitute a WH1 domain. A disordered region spans residues 117 to 210 (SLTPSSSSSS…PEPSEPLAGA (94 aa)). Low complexity-rich tracts occupy residues 120–130 (PSSSSSSSSPS) and 147–165 (DSSSSHSRQETPPSAAAAP). The KBD domain occupies 195 to 244 (LPFTGIPEPSEPLAGAGGLGWGGRGYEDYRRSGPPAPLALSTCVVRFAKT). Arginine 240 carries the post-translational modification Asymmetric dimethylarginine. An Omega-N-methylarginine modification is found at arginine 248. The segment at 258–288 (LPAPLTEAAPPAPPARPPPGPGPSSAPAKAS) is disordered. Pro residues predominate over residues 267–281 (PPAPPARPPPGPGPS). One can recognise an SPR domain in the interval 296-407 (RCVHCRALFR…CAGCGGRHEE (112 aa)).

As to quaternary structure, interacts with palmitoyltransferase ZDHHC17/HIP14; the interaction leads to palmitoylation of SPRED3. Post-translationally, phosphorylated on tyrosine. In terms of processing, palmitoylated by ZDHHC17/HIP14. Ubiquitinated.

The protein localises to the cell membrane. Its function is as follows. Tyrosine kinase substrate that inhibits growth-factor-mediated activation of MAP kinase. Inhibits fibroblast growth factor (FGF)-induced retinal lens fiber differentiation, probably by inhibiting FGF-mediated phosphorylation of ERK1/2. Inhibits TGFB-induced epithelial-to-mesenchymal transition in lens epithelial cells. The protein is Sprouty-related, EVH1 domain-containing protein 3 (SPRED3) of Homo sapiens (Human).